The chain runs to 180 residues: ATP synthase subunit delta (180 aa).

The protein belongs to the ATPase delta chain family. In terms of assembly, F-type ATPases have 2 components, F(1) - the catalytic core - and F(0) - the membrane proton channel. F(1) has five subunits: alpha(3), beta(3), gamma(1), delta(1), epsilon(1). F(0) has three main subunits: a(1), b(2) and c(10-14). The alpha and beta chains form an alternating ring which encloses part of the gamma chain. F(1) is attached to F(0) by a central stalk formed by the gamma and epsilon chains, while a peripheral stalk is formed by the delta and b chains.

It localises to the cell inner membrane. In terms of biological role, f(1)F(0) ATP synthase produces ATP from ADP in the presence of a proton or sodium gradient. F-type ATPases consist of two structural domains, F(1) containing the extramembraneous catalytic core and F(0) containing the membrane proton channel, linked together by a central stalk and a peripheral stalk. During catalysis, ATP synthesis in the catalytic domain of F(1) is coupled via a rotary mechanism of the central stalk subunits to proton translocation. This protein is part of the stalk that links CF(0) to CF(1). It either transmits conformational changes from CF(0) to CF(1) or is implicated in proton conduction. The chain is ATP synthase subunit delta from Pelobacter propionicus (strain DSM 2379 / NBRC 103807 / OttBd1).